Reading from the N-terminus, the 33-residue chain is Zinc metalloproteinase-disintegrin-like moojenin (33 aa).

Residues 8–33 (PPVCGNELLEVGEECDCGTPENCQNE) form the Disintegrin domain. The Ca(2+) site is built by Val10, Asn13, Leu15, Glu17, Glu20, and Asp23. Disulfide bonds link Cys11–Cys30 and Cys24–Cys30.

This sequence belongs to the venom metalloproteinase (M12B) family. P-III subfamily. P-IIIb sub-subfamily. In terms of assembly, monomer. The cofactor is Zn(2+). In terms of processing, the N-terminus (from the N-terminal region of the metalloproteinase domain) is blocked. In terms of tissue distribution, expressed by the venom gland.

It is found in the secreted. Its activity is regulated as follows. The fibrinogenolytic and coagulant activities of the moojenin were abolished by preincubation with EDTA, 1,10-phenanthroline and beta-mercaptoethanol. In terms of biological role, metalloproteinase moojenin: snake venom metalloproteinase that cleaves both alpha- and beta-chains of fibrinogen, but not the gamma-chain. Shows a coagulant activity on bovine plasma about 3.1 fold lower than crude venom. Renders the blood incoagulable when intraperitoneally administered into mice. Induces necrosis in liver and muscle, but does not cause histological alterations in mouse lungs, kidney or heart. The protein is Zinc metalloproteinase-disintegrin-like moojenin of Bothrops moojeni (Lance-headed viper).